The chain runs to 218 residues: Guanylate kinase (218 aa).

Residues 14 to 193 (GVMLVLSSPS…AFASVRAIVS (180 aa)) form the Guanylate kinase-like domain. 21–28 (SPSGAGKS) is an ATP binding site.

The protein belongs to the guanylate kinase family.

The protein resides in the cytoplasm. The catalysed reaction is GMP + ATP = GDP + ADP. Essential for recycling GMP and indirectly, cGMP. The protein is Guanylate kinase of Chelativorans sp. (strain BNC1).